The chain runs to 140 residues: Pro-variola growth factor (140 aa).

A signal peptide spans 1–18 (MSMKYLMLLFAAMIIRSF). Residues 19-100 (ANSGNAIETT…SEKPNTTTSY (82 aa)) are Extracellular-facing. Residue Asn-34 is glycosylated (N-linked (GlcNAc...) asparagine; by host). In terms of domain architecture, EGF-like spans 41–81 (AIRLCGPEGNGYCFHGICIHARDIDGMYCRCSHGYTGIRCQ). Cystine bridges form between Cys-45–Cys-58, Cys-53–Cys-69, and Cys-71–Cys-80. N-linked (GlcNAc...) asparagine; by host glycosylation occurs at Asn-95. The chain crosses the membrane as a helical span at residues 101–121 (IPSPGIVLVLLVSIIMCCLLF). Topologically, residues 122 to 140 (VYRFTRRTNKLPLQDMVVP) are cytoplasmic.

It belongs to the orthopoxvirus OPG019 family. As to quaternary structure, variola growth factor interacts with host EGFR and promotes EGFR dimerization.

Its subcellular location is the host membrane. It localises to the secreted. Stimulates cellular proliferation (hyperplasia)and mobility around infected cells to promote rapid and efficient spread of infection. This effect is beneficial for virus replication in vivo, because poxviruses replicate possibly better in proliferating cells than in quiescent cells. Acts by binding host EGFR, inducing its dimerization, autophosphorylation and leading to activation of several cellular pathways regulating cell proliferation or cell survival. The activation by host EGFR of mitogen activated protein kinases (MAPK) and extracellular-signal regulated kinases (ERK) are essential for the positive effect of vaccinia growth factor on poxvirus virulence in vivo. In Variola virus, this protein is Pro-variola growth factor (OPG019).